Here is a 66-residue protein sequence, read N- to C-terminus: Large ribosomal subunit protein bL35 (66 aa).

The protein belongs to the bacterial ribosomal protein bL35 family.

The chain is Large ribosomal subunit protein bL35 from Acholeplasma laidlawii (strain PG-8A).